The sequence spans 228 residues: HTH-type transcriptional repressor RspR (228 aa).

Positions 11-78 constitute an HTH gntR-type domain; that stretch reads QPVNQQIYRI…PQRGSYVNKI (68 aa). The segment at residues 38 to 57 is a DNA-binding region (H-T-H motif); it reads EKEVSVRFNVSRQPVREAFI.

Functionally, repressor of the rspAB operon. Acts by binding directly to the upstream region of rspA. The sequence is that of HTH-type transcriptional repressor RspR (rspR) from Escherichia coli (strain K12).